Reading from the N-terminus, the 280-residue chain is Urease accessory protein UreD (280 aa).

This sequence belongs to the UreD family. As to quaternary structure, ureD, UreF and UreG form a complex that acts as a GTP-hydrolysis-dependent molecular chaperone, activating the urease apoprotein by helping to assemble the nickel containing metallocenter of UreC. The UreE protein probably delivers the nickel.

Its subcellular location is the cytoplasm. Functionally, required for maturation of urease via the functional incorporation of the urease nickel metallocenter. The chain is Urease accessory protein UreD from Mesorhizobium japonicum (strain LMG 29417 / CECT 9101 / MAFF 303099) (Mesorhizobium loti (strain MAFF 303099)).